We begin with the raw amino-acid sequence, 139 residues long: Large ribosomal subunit protein bL17 (139 aa).

This sequence belongs to the bacterial ribosomal protein bL17 family. As to quaternary structure, part of the 50S ribosomal subunit. Contacts protein L32.

The polypeptide is Large ribosomal subunit protein bL17 (Azorhizobium caulinodans (strain ATCC 43989 / DSM 5975 / JCM 20966 / LMG 6465 / NBRC 14845 / NCIMB 13405 / ORS 571)).